Here is a 696-residue protein sequence, read N- to C-terminus: MAQAGPTPQQAIARLRAEIEQHNIRYYVHDDPSVPDAEYDALMRDLQALEAEHPELVTPDSPTQRVGAAPLAEFGSVRHAVPMLSLGNAFDEEDVRAFDKRVADTLRGAGLLGLDQQVEYFCELKLDGLAISLRYEEGRLAQAATRGDGQTGEDVTANIRTIKGVPLRLHGAPRVLEVRGEVLMNRAEFERLNRTQAARGEKVFVNPRNAAAGSLRQLDPRITAQRPLRFFAYSWGEVHGLPEGMPTRFDEPAPGVRVASTLPRDTHGGMLDWLAELGLPVNLRHNHRERGADGLLAFYERIGKLRADLPYDIDGVVYKVDALPSQRVLGFVARAPRFALAHKFPAEEAVTQLLGIEVQVGRTGAITPVARLAPVFVGGVTVTNATLHNEDEIRRKDVRIGDTVIVRRAGDVIPEVVGPVLEKRPADAREFVMLTACPICGSAIERPESEAIARCTGGLFCAAQRKQTLLHAAGRKALDIEGLGEKLIDQLVDADRVKSLADIYSLTAFELAALERMGKKSAENLVAAIDQARRPALGRLLFALGIRHVGETTARDVARHFGSMERIMDASEEALLAVPDVGGVVAGSIRRFFAEPHNREIVEQLTQQGVHPQAEAEPEGTSLAGKTFVLTGTMPNWTRDEATRRILAAGGKVSGSVSKKTAYLVTGEDAGSKLTKAQELGVPVLDEDGLKALLGL.

NAD(+)-binding positions include 36–40 (DAEYD), 85–86 (SL), and glutamate 123. Lysine 125 serves as the catalytic N6-AMP-lysine intermediate. Residues arginine 146, glutamate 181, lysine 319, and lysine 343 each contribute to the NAD(+) site. Positions 437, 440, 455, and 461 each coordinate Zn(2+). The BRCT domain maps to 618 to 696 (PEGTSLAGKT…EDGLKALLGL (79 aa)).

This sequence belongs to the NAD-dependent DNA ligase family. LigA subfamily. Requires Mg(2+) as cofactor. It depends on Mn(2+) as a cofactor.

The enzyme catalyses NAD(+) + (deoxyribonucleotide)n-3'-hydroxyl + 5'-phospho-(deoxyribonucleotide)m = (deoxyribonucleotide)n+m + AMP + beta-nicotinamide D-nucleotide.. In terms of biological role, DNA ligase that catalyzes the formation of phosphodiester linkages between 5'-phosphoryl and 3'-hydroxyl groups in double-stranded DNA using NAD as a coenzyme and as the energy source for the reaction. It is essential for DNA replication and repair of damaged DNA. The polypeptide is DNA ligase (Bordetella pertussis (strain Tohama I / ATCC BAA-589 / NCTC 13251)).